The sequence spans 147 residues: uncharacterized protein (147 aa).

Positions 1-137 (MRDNTIGSLI…LYELMTKVHK (137 aa)) constitute an HTH marR-type domain. The segment at residues 53-76 (QMELAEKVTVTQGGISRMLTRLEK) is a DNA-binding region (H-T-H motif).

This is an uncharacterized protein from Bacillus cereus (strain ATCC 10987 / NRS 248).